Consider the following 86-residue polypeptide: RNA-binding protein Hfq (86 aa).

The 60-residue stretch at aspartate 9–valine 68 folds into the Sm domain. A disordered region spans residues arginine 66 to alanine 86. The segment covering aspartate 75–alanine 86 has biased composition (basic and acidic residues).

It belongs to the Hfq family. Homohexamer.

RNA chaperone that binds small regulatory RNA (sRNAs) and mRNAs to facilitate mRNA translational regulation in response to envelope stress, environmental stress and changes in metabolite concentrations. Also binds with high specificity to tRNAs. The protein is RNA-binding protein Hfq of Pseudomonas putida (strain ATCC 700007 / DSM 6899 / JCM 31910 / BCRC 17059 / LMG 24140 / F1).